A 374-amino-acid chain; its full sequence is DNA replication and repair protein RecF (374 aa).

Glycine 34–threonine 41 provides a ligand contact to ATP.

The protein belongs to the RecF family.

It localises to the cytoplasm. The RecF protein is involved in DNA metabolism; it is required for DNA replication and normal SOS inducibility. RecF binds preferentially to single-stranded, linear DNA. It also seems to bind ATP. The sequence is that of DNA replication and repair protein RecF from Rhizobium etli (strain ATCC 51251 / DSM 11541 / JCM 21823 / NBRC 15573 / CFN 42).